The sequence spans 206 residues: Ribosomal RNA large subunit methyltransferase E (206 aa).

Residues glycine 60, tryptophan 62, aspartate 80, aspartate 96, and aspartate 121 each coordinate S-adenosyl-L-methionine. The active-site Proton acceptor is the lysine 161.

This sequence belongs to the class I-like SAM-binding methyltransferase superfamily. RNA methyltransferase RlmE family.

The protein resides in the cytoplasm. The catalysed reaction is uridine(2552) in 23S rRNA + S-adenosyl-L-methionine = 2'-O-methyluridine(2552) in 23S rRNA + S-adenosyl-L-homocysteine + H(+). Functionally, specifically methylates the uridine in position 2552 of 23S rRNA at the 2'-O position of the ribose in the fully assembled 50S ribosomal subunit. The protein is Ribosomal RNA large subunit methyltransferase E of Francisella tularensis subsp. novicida (strain U112).